The primary structure comprises 505 residues: Alpha-1-syntrophin (505 aa).

Disordered regions lie at residues Met-1 to Gly-25 and Leu-40 to Leu-77. PH domains are found at residues Arg-6–Asn-269 and Asp-293–His-401. Residues Arg-87–Lys-170 enclose the PDZ domain. A phosphoserine mark is found at Ser-101, Ser-184, Ser-189, Ser-193, and Ser-200. Positions Thr-180–Ser-210 are disordered. The 57-residue stretch at Pro-449–Ala-505 folds into the SU domain. Residues Pro-483–Ala-505 are calmodulin-binding.

Belongs to the syntrophin family. As to quaternary structure, monomer and homodimer. Interacts with the other members of the syntrophin family SNTB1 and SNTB2; SGCG and SGCA of the dystrophin glycoprotein complex; NOS1; GRB2; the sodium channel proteins SCN4A and SCN5A; F-actin and calmodulin. Interacts with dystrophin protein DMD and related proteins DTNA and UTRN and with MAPK12, TGFA and GA. Interacts with MYOC; regulates muscle hypertrophy. Interacts with DTNB. In terms of processing, phosphorylated by CaM-kinase II. Phosphorylation may inhibit the interaction with DMD. In terms of tissue distribution, high expression in skeletal muscle and heart. Low expression in brain, pancreas, liver, kidney and lung. Not detected in placenta.

The protein resides in the cell membrane. The protein localises to the sarcolemma. Its subcellular location is the cell junction. It is found in the cytoplasm. It localises to the cytoskeleton. Functionally, adapter protein that binds to and probably organizes the subcellular localization of a variety of membrane proteins. May link various receptors to the actin cytoskeleton and the extracellular matrix via the dystrophin glycoprotein complex. Plays an important role in synapse formation and in the organization of UTRN and acetylcholine receptors at the neuromuscular synapse. Binds to phosphatidylinositol 4,5-bisphosphate. The sequence is that of Alpha-1-syntrophin (SNTA1) from Homo sapiens (Human).